The chain runs to 538 residues: RNA-binding protein Ro60 (538 aa).

M1 bears the N-acetylmethionine mark. Phosphoserine occurs at positions 4 and 19. The region spanning 16 to 369 is the TROVE domain; it reads VVNSEGGCVW…TFKTVEPTGK (354 aa). The segment at 120-284 is RNA-binding; the sequence is RIPTHLFTFI…EMPLTALLRN (165 aa). K224 is modified (N6-acetyllysine). The tract at residues 361–538 is VWFA-like domain; the sequence is FKTVEPTGKR…VIRNFTLDVI (178 aa). Residues S378, S380, and T445 each coordinate a divalent metal cation.

Belongs to the Ro 60 kDa family. Identified in a IGF2BP1-dependent mRNP granule complex containing untranslated mRNAs. Found in a complex with PUF60 and Y5 RNA. Interacts with RAB11FIP5. Highest in brain, followed by lung, muscle, kidney and heart. Lower levels are found in testis, liver and spleen.

It is found in the cytoplasm. Its function is as follows. RNA-binding protein that binds to misfolded non-coding RNAs, pre-5S rRNA, and several small cytoplasmic RNA molecules known as Y RNAs. May play roles in cilia formation and/or maintenance. The chain is RNA-binding protein Ro60 from Mus musculus (Mouse).